Reading from the N-terminus, the 181-residue chain is Probable pyruvoyl-dependent arginine decarboxylase (181 aa).

Serine 43 carries the pyruvic acid (Ser) modification.

It belongs to the PdaD family. It depends on pyruvate as a cofactor.

It catalyses the reaction L-arginine + H(+) = agmatine + CO2. In Chlorobaculum parvum (strain DSM 263 / NCIMB 8327) (Chlorobium vibrioforme subsp. thiosulfatophilum), this protein is Probable pyruvoyl-dependent arginine decarboxylase.